Reading from the N-terminus, the 173-residue chain is MGNASHFALFDLEPDFRLDQDRLAVRYRELVRRVHPDRFAGAPEREQRLALEEAARLNEAYQTLKSPSQRARYLLSLQGEELSQETTVQDPAFLMQQMELREELQELQDSADLAGVARFKRRLVQDQEQLNEGFAACWADPRRRDEAERLARRMQFLDKLFAEVRQLEERLDD.

The 73-residue stretch at Ser5 to Leu77 folds into the J domain.

This sequence belongs to the HscB family. Interacts with HscA and stimulates its ATPase activity.

Co-chaperone involved in the maturation of iron-sulfur cluster-containing proteins. Seems to help targeting proteins to be folded toward HscA. The sequence is that of Co-chaperone protein HscB homolog from Azotobacter vinelandii (strain DJ / ATCC BAA-1303).